The sequence spans 400 residues: Glutamyl-tRNA reductase (400 aa).

Substrate-binding positions include 45-48, S103, 108-110, and Q114; these read TCNR and EDQ. C46 (nucleophile) is an active-site residue. 179-184 contributes to the NADP(+) binding site; the sequence is GYGEIG.

This sequence belongs to the glutamyl-tRNA reductase family. In terms of assembly, homodimer.

It carries out the reaction (S)-4-amino-5-oxopentanoate + tRNA(Glu) + NADP(+) = L-glutamyl-tRNA(Glu) + NADPH + H(+). Its pathway is porphyrin-containing compound metabolism; protoporphyrin-IX biosynthesis; 5-aminolevulinate from L-glutamyl-tRNA(Glu): step 1/2. Its function is as follows. Catalyzes the NADPH-dependent reduction of glutamyl-tRNA(Glu) to glutamate 1-semialdehyde (GSA). This chain is Glutamyl-tRNA reductase, found in Clostridium perfringens (strain SM101 / Type A).